The following is a 407-amino-acid chain: Protein phosphatase methylesterase 1 (407 aa).

The segment at 1-53 (MSDLQKSFAKSKLAKLPPEPPPIPESVADEDDDSGSSTETVTPSPVKQLFARP) is disordered. Active-site residues include Ser185, Asp211, and His342. The segment covering 388 to 401 (GAGVPLGKAEGGTT) has biased composition (gly residues). A disordered region spans residues 388–407 (GAGVPLGKAEGGTTGSFKRS).

It belongs to the AB hydrolase superfamily.

It catalyses the reaction [phosphatase 2A protein]-C-terminal L-leucine methyl ester + H2O = [phosphatase 2A protein]-C-terminal L-leucine + methanol + H(+). Demethylates proteins that have been reversibly carboxymethylated. Demethylates the phosphatase PP2A catalytic subunit. This Emericella nidulans (strain FGSC A4 / ATCC 38163 / CBS 112.46 / NRRL 194 / M139) (Aspergillus nidulans) protein is Protein phosphatase methylesterase 1 (ppe1).